The chain runs to 188 residues: Ribosome-recycling factor (188 aa).

This sequence belongs to the RRF family.

Its subcellular location is the cytoplasm. In terms of biological role, responsible for the release of ribosomes from messenger RNA at the termination of protein biosynthesis. May increase the efficiency of translation by recycling ribosomes from one round of translation to another. The sequence is that of Ribosome-recycling factor from Blochmanniella floridana.